Reading from the N-terminus, the 93-residue chain is Co-chaperonin GroES 2 (93 aa).

The tract at residues 1 to 20 (MQPLGERIVVQREESETTTA) is disordered.

The protein belongs to the GroES chaperonin family. As to quaternary structure, heptamer of 7 subunits arranged in a ring. Interacts with the chaperonin GroEL.

Its subcellular location is the cytoplasm. Together with the chaperonin GroEL, plays an essential role in assisting protein folding. The GroEL-GroES system forms a nano-cage that allows encapsulation of the non-native substrate proteins and provides a physical environment optimized to promote and accelerate protein folding. GroES binds to the apical surface of the GroEL ring, thereby capping the opening of the GroEL channel. This is Co-chaperonin GroES 2 from Rhodopirellula baltica (strain DSM 10527 / NCIMB 13988 / SH1).